The chain runs to 351 residues: L-threonine 3-dehydrogenase (351 aa).

Cysteine 39 lines the Zn(2+) pocket. Residues threonine 41 and histidine 44 each act as charge relay system in the active site. The Zn(2+) site is built by histidine 64, glutamate 65, cysteine 94, cysteine 97, cysteine 100, and cysteine 108. NAD(+)-binding positions include isoleucine 176, aspartate 196, arginine 201, 271–273 (LGI), and 295–296 (IY).

This sequence belongs to the zinc-containing alcohol dehydrogenase family. Homotetramer. The cofactor is Zn(2+).

The protein localises to the cytoplasm. It carries out the reaction L-threonine + NAD(+) = (2S)-2-amino-3-oxobutanoate + NADH + H(+). It functions in the pathway amino-acid degradation; L-threonine degradation via oxydo-reductase pathway; glycine from L-threonine: step 1/2. Its function is as follows. Catalyzes the NAD(+)-dependent oxidation of L-threonine to 2-amino-3-ketobutyrate. This chain is L-threonine 3-dehydrogenase, found in Francisella philomiragia subsp. philomiragia (strain ATCC 25017 / CCUG 19701 / FSC 153 / O#319-036).